We begin with the raw amino-acid sequence, 271 residues long: DNA-binding protein HEXBP (271 aa).

Basic and acidic residues-rich tracts occupy residues 1 to 12 (MSETEDVKRPRT) and 21 to 42 (CGKE…DERS). The segment at 1-42 (MSETEDVKRPRTESSTSCRNCGKEGHYARECPEADSKGDERS) is disordered. 4 consecutive CCHC-type zinc fingers follow at residues 16 to 33 (TSCR…ECPE), 43 to 60 (TTCF…ECPN), 70 to 87 (MTCF…DCPN), and 97 to 114 (FECY…DCPS). A disordered region spans residues 107-136 (HLSRDCPSSQGGSRGGYGQKRGRSGAQGGY). Over residues 118–136 (GSRGGYGQKRGRSGAQGGY) the composition is skewed to gly residues. 5 consecutive CCHC-type zinc fingers follow at residues 140-157 (RTCY…DCPN), 168-185 (RTCY…DCPN), 196-213 (RKCY…ECPS), 222-239 (RACY…ECPE), and 253-270 (RTCY…DCPS).

The protein resides in the nucleus. Functionally, binds to single-stranded DNA located in the 5' hexanucleotide repeat region of the L.major leishmanolysin (GP63) gene. This Leishmania major protein is DNA-binding protein HEXBP (HEXBP).